The following is a 172-amino-acid chain: Translationally-controlled tumor protein (172 aa).

The TCTP domain maps to 1–172; that stretch reads MIIYRDLISH…FKDGLEMEKC (172 aa). S46 carries the phosphoserine; by PLK1 modification. Phosphoserine is present on S53. At S64 the chain carries Phosphoserine; by PLK1. The required for reduction of TSC22D1 protein stability stretch occupies residues 70-172; it reads VDIVMNHHLQ…FKDGLEMEKC (103 aa).

The protein belongs to the TCTP family. As to quaternary structure, homodimer. Interacts with STEAP3. Interacts with TSC22D1; interaction results in the destabilization of TSC22D1 protein. As to expression, found in several healthy and tumoral cells including erythrocytes, hepatocytes, macrophages, platelets, keratinocytes, erythroleukemia cells, gliomas, melanomas, hepatoblastomas, and lymphomas. It cannot be detected in kidney and renal cell carcinoma (RCC). Expressed in placenta and prostate.

It localises to the cytoplasm. In terms of biological role, involved in calcium binding and microtubule stabilization. Acts as a negative regulator of TSC22D1-mediated apoptosis, via interaction with and destabilization of TSC22D1 protein. This Homo sapiens (Human) protein is Translationally-controlled tumor protein (TPT1).